Here is a 132-residue protein sequence, read N- to C-terminus: Small ribosomal subunit protein uS8 (132 aa).

Belongs to the universal ribosomal protein uS8 family. In terms of assembly, part of the 30S ribosomal subunit. Contacts proteins S5 and S12.

Functionally, one of the primary rRNA binding proteins, it binds directly to 16S rRNA central domain where it helps coordinate assembly of the platform of the 30S subunit. The sequence is that of Small ribosomal subunit protein uS8 from Listeria innocua serovar 6a (strain ATCC BAA-680 / CLIP 11262).